The chain runs to 215 residues: Eukaryotic translation initiation factor 4E (215 aa).

Residues Met1–Pro27 are disordered. Ser207 carries the post-translational modification Phosphoserine; by PKC.

Belongs to the eukaryotic initiation factor 4E family. EIF4F is a multi-subunit complex, the composition of which varies with external and internal environmental conditions. It is composed of at least eIF4A, eIF4E and eIF4G. eIF4E is also known to interact with other partners. In terms of processing, phosphorylation increases the ability of the protein to bind to mRNA caps and to form the eIF4F complex.

Functionally, recognizes and binds the 7-methylguanosine-containing mRNA cap during an early step in the initiation of protein synthesis and facilitates ribosome binding by inducing the unwinding of the mRNAs secondary structures. The polypeptide is Eukaryotic translation initiation factor 4E (Aplysia californica (California sea hare)).